Consider the following 205-residue polypeptide: uncharacterized protein (205 aa).

The first 19 residues, 1-19 (MKTLCVLSIFLALLGGLCT), serve as a signal peptide directing secretion. The span at 40–133 (VSSVASTSTP…PKTSKNNPKT (94 aa)) shows a compositional bias: low complexity. Positions 40–135 (VSSVASTSTP…TSKNNPKTQE (96 aa)) are disordered. The chain crosses the membrane as a helical span at residues 147 to 167 (GILYLFILLLIIFVIILICFI).

It localises to the host membrane. This is an uncharacterized protein from Equine herpesvirus 2 (strain 86/87) (EHV-2).